Reading from the N-terminus, the 417-residue chain is Synaptic vesicle membrane protein VAT-1 homolog-like (417 aa).

Disordered regions lie at residues 1–33 (MAKE…GSHR) and 382–417 (PTPL…PFIQ). Phosphoserine is present on serine 390. Residues threonine 391 and threonine 393 each carry the phosphothreonine modification. Serine 394 bears the Phosphoserine mark. Positions 395–405 (EAGEEEEDHEG) are enriched in acidic residues. The span at 406–417 (DSENKERMPFIQ) shows a compositional bias: basic and acidic residues.

The protein belongs to the zinc-containing alcohol dehydrogenase family. Quinone oxidoreductase subfamily.

This is Synaptic vesicle membrane protein VAT-1 homolog-like (Vat1l) from Mus musculus (Mouse).